Reading from the N-terminus, the 494-residue chain is Glycerol kinase (494 aa).

Residue Thr13 participates in ADP binding. Thr13, Thr14, and Ser15 together coordinate ATP. A sn-glycerol 3-phosphate-binding site is contributed by Thr13. Arg17 is an ADP binding site. Residues Arg83, Glu84, Tyr135, and Asp244 each contribute to the sn-glycerol 3-phosphate site. Positions 83, 84, 135, 244, and 245 each coordinate glycerol. Residues Thr266 and Gly309 each contribute to the ADP site. ATP-binding residues include Thr266, Gly309, Gln313, and Gly410. Gly410 and Asn414 together coordinate ADP.

It belongs to the FGGY kinase family.

It carries out the reaction glycerol + ATP = sn-glycerol 3-phosphate + ADP + H(+). It participates in polyol metabolism; glycerol degradation via glycerol kinase pathway; sn-glycerol 3-phosphate from glycerol: step 1/1. With respect to regulation, inhibited by fructose 1,6-bisphosphate (FBP). Key enzyme in the regulation of glycerol uptake and metabolism. Catalyzes the phosphorylation of glycerol to yield sn-glycerol 3-phosphate. The polypeptide is Glycerol kinase (Shewanella oneidensis (strain ATCC 700550 / JCM 31522 / CIP 106686 / LMG 19005 / NCIMB 14063 / MR-1)).